The primary structure comprises 513 residues: Probable DNA ligase (513 aa).

ATP is bound at residue Glu213. The N6-AMP-lysine intermediate role is filled by Lys215. Residues Arg220, Arg235, Glu264, Phe304, Arg376, and Lys382 each coordinate ATP.

The protein belongs to the ATP-dependent DNA ligase family. Mg(2+) is required as a cofactor.

It catalyses the reaction ATP + (deoxyribonucleotide)n-3'-hydroxyl + 5'-phospho-(deoxyribonucleotide)m = (deoxyribonucleotide)n+m + AMP + diphosphate.. Its function is as follows. DNA ligase that seals nicks in double-stranded DNA during DNA replication, DNA recombination and DNA repair. This chain is Probable DNA ligase, found in Anaeromyxobacter sp. (strain K).